Consider the following 113-residue polypeptide: UPF0416 protein RF_0879 (113 aa).

It belongs to the UPF0416 family.

This is UPF0416 protein RF_0879 from Rickettsia felis (strain ATCC VR-1525 / URRWXCal2) (Rickettsia azadi).